The primary structure comprises 91 residues: PqqA binding protein (91 aa).

The protein belongs to the PqqD family. In terms of assembly, monomer. Interacts with PqqE.

The protein operates within cofactor biosynthesis; pyrroloquinoline quinone biosynthesis. Its function is as follows. Functions as a PqqA binding protein and presents PqqA to PqqE, in the pyrroloquinoline quinone (PQQ) biosynthetic pathway. This is PqqA binding protein from Pseudomonas fluorescens (strain ATCC BAA-477 / NRRL B-23932 / Pf-5).